The following is a 317-amino-acid chain: Pantothenate kinase (317 aa).

Position 99 to 106 (99 to 106 (GSVSVGKS)) interacts with ATP.

It belongs to the prokaryotic pantothenate kinase family.

Its subcellular location is the cytoplasm. The enzyme catalyses (R)-pantothenate + ATP = (R)-4'-phosphopantothenate + ADP + H(+). It participates in cofactor biosynthesis; coenzyme A biosynthesis; CoA from (R)-pantothenate: step 1/5. This is Pantothenate kinase from Histophilus somni (strain 129Pt) (Haemophilus somnus).